We begin with the raw amino-acid sequence, 290 residues long: uncharacterized protein (290 aa).

3 disordered regions span residues 89–157, 172–217, and 261–290; these read CSEN…EELS, MANT…MESS, and TANT…AVKK. Basic and acidic residues-rich tracts occupy residues 106–124 and 142–152; these read DFSK…EKQP and KTEKLVSKEPS. 2 stretches are compositionally biased toward polar residues: residues 172-183 and 193-202; these read MANTSSSANRTG and KPTTAVQAST. Low complexity-rich tracts occupy residues 207-217 and 274-290; these read MSSAESAMESS and PSSE…AVKK.

This is an uncharacterized protein from Caenorhabditis elegans.